The chain runs to 496 residues: Probable E3 ubiquitin-protein ligase ARI12 (496 aa).

Residues 110–319 (NEYFCGACGE…GDLHFCTFDA (210 aa)) are TRIAD supradomain. Positions 114, 117, 131, 133, 136, 139, 162, 172, 240, 243, 248, 253, 267, 270, 286, and 289 each coordinate Zn(2+). The RING-type 1 zinc-finger motif lies at 114-172 (CGACGESHPHKNLASVSCGHRICTRCWTSHINKIISEKPAAEWNLWLKCPVRVGLHASC). The segment at 191–253 (FNYNQYLLRS…REDAHSPVDC (63 aa)) adopts an IBR-type zinc-finger fold. The RING-type 2; atypical zinc-finger motif lies at 267–297 (CPKCKLRIPRNQDNSLKMKCLPCNYVFCWFC).

Belongs to the RBR family. Ariadne subfamily. Zn(2+) serves as cofactor. In terms of tissue distribution, preferentially expressed in roots.

The enzyme catalyses [E2 ubiquitin-conjugating enzyme]-S-ubiquitinyl-L-cysteine + [acceptor protein]-L-lysine = [E2 ubiquitin-conjugating enzyme]-L-cysteine + [acceptor protein]-N(6)-ubiquitinyl-L-lysine.. The protein operates within protein modification; protein ubiquitination. Functionally, might act as an E3 ubiquitin-protein ligase, or as part of E3 complex, which accepts ubiquitin from specific E2 ubiquitin-conjugating enzymes and then transfers it to substrates. This chain is Probable E3 ubiquitin-protein ligase ARI12 (ARI12), found in Arabidopsis thaliana (Mouse-ear cress).